We begin with the raw amino-acid sequence, 425 residues long: Imidazolonepropionase (425 aa).

Fe(3+) is bound by residues histidine 82 and histidine 84. Positions 82 and 84 each coordinate Zn(2+). 4-imidazolone-5-propanoate is bound by residues arginine 91, tyrosine 154, and histidine 187. Residue tyrosine 154 coordinates N-formimidoyl-L-glutamate. Histidine 253 is a binding site for Fe(3+). Histidine 253 contacts Zn(2+). Glutamate 256 is a binding site for 4-imidazolone-5-propanoate. Aspartate 328 is a binding site for Fe(3+). Aspartate 328 provides a ligand contact to Zn(2+). Positions 330 and 332 each coordinate N-formimidoyl-L-glutamate. Serine 333 contributes to the 4-imidazolone-5-propanoate binding site.

This sequence belongs to the metallo-dependent hydrolases superfamily. HutI family. Requires Zn(2+) as cofactor. Fe(3+) serves as cofactor.

It is found in the cytoplasm. It catalyses the reaction 4-imidazolone-5-propanoate + H2O = N-formimidoyl-L-glutamate. Its pathway is amino-acid degradation; L-histidine degradation into L-glutamate; N-formimidoyl-L-glutamate from L-histidine: step 3/3. Catalyzes the hydrolytic cleavage of the carbon-nitrogen bond in imidazolone-5-propanoate to yield N-formimidoyl-L-glutamate. It is the third step in the universal histidine degradation pathway. The polypeptide is Imidazolonepropionase (Symbiobacterium thermophilum (strain DSM 24528 / JCM 14929 / IAM 14863 / T)).